We begin with the raw amino-acid sequence, 149 residues long: Ribonuclease H (149 aa).

The region spanning 4 to 145 (QRGVVEAFTD…ADALANQGID (142 aa)) is the RNase H type-1 domain. Positions 13, 51, 73, and 137 each coordinate Mg(2+).

It belongs to the RNase H family. In terms of assembly, monomer. Requires Mg(2+) as cofactor.

It localises to the cytoplasm. It catalyses the reaction Endonucleolytic cleavage to 5'-phosphomonoester.. Its function is as follows. Endonuclease that specifically degrades the RNA of RNA-DNA hybrids. This is Ribonuclease H from Halorhodospira halophila (strain DSM 244 / SL1) (Ectothiorhodospira halophila (strain DSM 244 / SL1)).